A 205-amino-acid chain; its full sequence is N-(5'-phosphoribosyl)anthranilate isomerase (205 aa).

Belongs to the TrpF family.

The catalysed reaction is N-(5-phospho-beta-D-ribosyl)anthranilate = 1-(2-carboxyphenylamino)-1-deoxy-D-ribulose 5-phosphate. It functions in the pathway amino-acid biosynthesis; L-tryptophan biosynthesis; L-tryptophan from chorismate: step 3/5. The protein is N-(5'-phosphoribosyl)anthranilate isomerase of Phocaeicola vulgatus (strain ATCC 8482 / DSM 1447 / JCM 5826 / CCUG 4940 / NBRC 14291 / NCTC 11154) (Bacteroides vulgatus).